The chain runs to 1066 residues: FHIP family protein GH13096 (1066 aa).

Residues 1-15 (MSWLRTSPLRQSLTR) are compositionally biased toward polar residues. The segment at 1–33 (MSWLRTSPLRQSLTRNSGGNGSGGSGNSGNASA) is disordered. Residues 18–27 (GGNGSGGSGN) are compositionally biased toward gly residues. Ser-512 bears the Phosphoserine mark. Disordered stretches follow at residues 647–688 (SFKW…NSSG), 827–885 (DNSP…RSDN), and 942–1010 (SRGV…FNSE). Residues 658-687 (NDATTTTATSDPDVEHNNSSNHNNSSINSS) are compositionally biased toward low complexity. At Ser-829 the chain carries Phosphoserine. The segment covering 836–856 (HQQQQLQHTTNSTHQQQQAQQ) has biased composition (low complexity). The span at 950–963 (PRGNTCETSLSTTP) shows a compositional bias: polar residues. Over residues 967–996 (AQATSASSTNSSIGGSTQTLSATHSSSTLH) the composition is skewed to low complexity. The segment covering 1001 to 1010 (GPQTASFNSE) has biased composition (polar residues).

This sequence belongs to the FHIP family.

In Drosophila grimshawi (Hawaiian fruit fly), this protein is FHIP family protein GH13096.